The primary structure comprises 305 residues: Putative lipid kinase USA300HOU_0749 (305 aa).

In terms of domain architecture, DAGKc spans 3 to 139 (NKYTHGVLFY…YDVIKINNQY (137 aa)). Residues Ser44, 74-80 (GDGTVNE), and Thr101 contribute to the ATP site. The Mg(2+) site is built by Ser220, Asp223, and Glu225. Glu281 serves as the catalytic Proton acceptor.

The protein belongs to the diacylglycerol/lipid kinase family. Requires Mg(2+) as cofactor.

May catalyze the ATP-dependent phosphorylation of lipids other than diacylglycerol (DAG). This chain is Putative lipid kinase USA300HOU_0749, found in Staphylococcus aureus (strain USA300 / TCH1516).